The sequence spans 386 residues: Caspase-1-A (386 aa).

The propeptide occupies M1–E100. The CARD domain occupies S22–L88. Catalysis depends on residues H218 and C274. A propeptide spanning residues D287 to D296 is cleaved from the precursor.

The protein belongs to the peptidase C14A family. As to quaternary structure, heterotetramer that consists of two anti-parallel arranged heterodimers, each one formed by a 20 kDa (Caspase-1 subunit p20) and a 10 kDa (Caspase-1 subunit p10) subunit. In terms of assembly, heterotetramer that consists of two anti-parallel arranged heterodimers, each one formed by a 20 kDa (Caspase-1 subunit p20) and a 10 kDa (Caspase-1 subunit p10) subunit. Can form a heterodimer with isoform epsilon which then has an inhibitory effect. The two subunits are derived from the precursor sequence by an autocatalytic mechanism.

It localises to the cytoplasm. The protein resides in the cell membrane. It carries out the reaction Strict requirement for an Asp residue at position P1 and has a preferred cleavage sequence of Tyr-Val-Ala-Asp-|-.. Its function is as follows. Thiol protease involved in a variety of inflammatory processes by proteolytically cleaving other proteins, such as the precursors of the inflammatory cytokines interleukin-1 beta (IL1B) and interleukin 18 (IL18) as well as the pyroptosis inducer Gasdermin-D (GSDMD), into active mature peptides. Plays a key role in cell immunity as an inflammatory response initiator: once activated through formation of an inflammasome complex, it initiates a pro-inflammatory response through the cleavage of the two inflammatory cytokines IL1B and IL18, releasing the mature cytokines which are involved in a variety of inflammatory processes. Cleaves a tetrapeptide after an Asp residue at position P1. Also initiates pyroptosis, a programmed lytic cell death pathway, through cleavage of GSDMD. This Xenopus laevis (African clawed frog) protein is Caspase-1-A (casp1-a).